We begin with the raw amino-acid sequence, 135 residues long: Interleukin-5 (135 aa).

The signal sequence occupies residues 1–19 (MRVLLQLGLLALGAVCVCA). 3 N-linked (GlcNAc...) asparagine glycosylation sites follow: Asn48, Asn77, and Asn91.

The protein belongs to the IL-5 family. As to quaternary structure, homodimer; disulfide-linked. Interacts with IL5RA. Interacts with CSF2RB.

It localises to the secreted. In terms of biological role, homodimeric cytokine expressed predominantly by T-lymphocytes and NK cells that plays an important role in the survival, differentiation, and chemotaxis of eosinophils. Also acts on activated and resting B-cells to induce immunoglobulin production, growth, and differentiation. Mechanistically, exerts its biological effects through a receptor composed of IL5RA subunit and the cytokine receptor common subunit beta/CSF2RB. Binding to the receptor leads to activation of various kinases including LYN, SYK and JAK2 and thereby propagates signals through the RAS-MAPK and JAK-STAT5 pathways respectively. In Cavia porcellus (Guinea pig), this protein is Interleukin-5 (IL5).